Here is a 255-residue protein sequence, read N- to C-terminus: Large ribosomal subunit protein uL4 (255 aa).

Belongs to the universal ribosomal protein uL4 family. In terms of assembly, part of the 50S ribosomal subunit.

Its function is as follows. One of the primary rRNA binding proteins, this protein initially binds near the 5'-end of the 23S rRNA. It is important during the early stages of 50S assembly. It makes multiple contacts with different domains of the 23S rRNA in the assembled 50S subunit and ribosome. Functionally, forms part of the polypeptide exit tunnel. The protein is Large ribosomal subunit protein uL4 of Thermococcus onnurineus (strain NA1).